Here is a 307-residue protein sequence, read N- to C-terminus: Ribonuclease Z (307 aa).

Residues His63, His65, Asp67, His68, His141, Asp212, and His270 each contribute to the Zn(2+) site. Asp67 serves as the catalytic Proton acceptor.

This sequence belongs to the RNase Z family. As to quaternary structure, homodimer. It depends on Zn(2+) as a cofactor.

The enzyme catalyses Endonucleolytic cleavage of RNA, removing extra 3' nucleotides from tRNA precursor, generating 3' termini of tRNAs. A 3'-hydroxy group is left at the tRNA terminus and a 5'-phosphoryl group is left at the trailer molecule.. Its function is as follows. Zinc phosphodiesterase, which displays some tRNA 3'-processing endonuclease activity. Probably involved in tRNA maturation, by removing a 3'-trailer from precursor tRNA. The polypeptide is Ribonuclease Z (Bacillus cereus (strain B4264)).